Consider the following 428-residue polypeptide: Trigger factor (428 aa).

One can recognise a PPIase FKBP-type domain in the interval 163-248 (GDTAVIDFEG…VHEIKEKRLP (86 aa)).

This sequence belongs to the FKBP-type PPIase family. Tig subfamily.

Its subcellular location is the cytoplasm. It catalyses the reaction [protein]-peptidylproline (omega=180) = [protein]-peptidylproline (omega=0). Involved in protein export. Acts as a chaperone by maintaining the newly synthesized protein in an open conformation. Functions as a peptidyl-prolyl cis-trans isomerase. The protein is Trigger factor of Geobacillus sp. (strain WCH70).